The chain runs to 446 residues: Saccharopine dehydrogenase [NADP(+), L-glutamate-forming] (446 aa).

Residues 10-13 (SGFV), 33-35 (CRT), 54-55 (DV), Ile-75, 97-98 (SS), 124-126 (LDP), and Ser-174 each bind NADP(+). L-saccharopine contacts are provided by residues 98–99 (SY) and Asp-125. Residues Arg-223 and 244–246 (TLR) each bind L-saccharopine.

This sequence belongs to the saccharopine dehydrogenase family. As to quaternary structure, interacts with TRM112.

It carries out the reaction L-saccharopine + NADP(+) + H2O = (S)-2-amino-6-oxohexanoate + L-glutamate + NADPH + H(+). It participates in amino-acid biosynthesis; L-lysine biosynthesis via AAA pathway; L-lysine from L-alpha-aminoadipate (fungal route): step 2/3. This chain is Saccharopine dehydrogenase [NADP(+), L-glutamate-forming] (LYS9), found in Saccharomyces cerevisiae (strain ATCC 204508 / S288c) (Baker's yeast).